A 273-amino-acid polypeptide reads, in one-letter code: Probable ribosomal RNA small subunit methyltransferase A (273 aa).

N26, L28, G53, E74, D98, and N113 together coordinate S-adenosyl-L-methionine.

Belongs to the class I-like SAM-binding methyltransferase superfamily. rRNA adenine N(6)-methyltransferase family. RsmA subfamily.

It localises to the cytoplasm. Specifically dimethylates two adjacent adenosines in the loop of a conserved hairpin near the 3'-end of 16S rRNA in the 30S particle. May play a critical role in biogenesis of 30S subunits. This chain is Probable ribosomal RNA small subunit methyltransferase A, found in Methanothermobacter thermautotrophicus (strain ATCC 29096 / DSM 1053 / JCM 10044 / NBRC 100330 / Delta H) (Methanobacterium thermoautotrophicum).